We begin with the raw amino-acid sequence, 283 residues long: Pantothenate synthetase (283 aa).

Residue 30–37 participates in ATP binding; it reads MGNLHDGH. Residue H37 is the Proton donor of the active site. Q61 is a binding site for (R)-pantoate. Q61 contacts beta-alanine. 149 to 152 provides a ligand contact to ATP; it reads GEKD. Q155 lines the (R)-pantoate pocket. 186–189 serves as a coordination point for ATP; that stretch reads LSSR.

Belongs to the pantothenate synthetase family. In terms of assembly, homodimer.

The protein localises to the cytoplasm. The enzyme catalyses (R)-pantoate + beta-alanine + ATP = (R)-pantothenate + AMP + diphosphate + H(+). The protein operates within cofactor biosynthesis; (R)-pantothenate biosynthesis; (R)-pantothenate from (R)-pantoate and beta-alanine: step 1/1. Functionally, catalyzes the condensation of pantoate with beta-alanine in an ATP-dependent reaction via a pantoyl-adenylate intermediate. In Escherichia coli O157:H7, this protein is Pantothenate synthetase.